A 764-amino-acid polypeptide reads, in one-letter code: Thyrotropin receptor (764 aa).

Positions 1-21 (MRPGSLLLLVLLLALSRSLRG) are cleaved as a signal peptide. The Extracellular portion of the chain corresponds to 22-413 (KECASPPCEC…EFNPCEDIMG (392 aa)). An intrachain disulfide couples Cys31 to Cys41. N-linked (GlcNAc...) asparagine glycans are attached at residues Asn77 and Asn99. LRR repeat units follow at residues 100 to 124 (LSKM…ALTE), 125 to 150 (LPLL…IYST), 151 to 174 (DIFF…AFQG), 176 to 199 (CNET…AFNG), 200 to 223 (TKLD…AFGG), 225 to 248 (YSGP…GLEH), and 264 to 288 (PLSL…AFKN). N-linked (GlcNAc...) asparagine glycans are attached at residues Asn177 and Asn198. Residue Asn302 is glycosylated (N-linked (GlcNAc...) asparagine). Sulfotyrosine is present on Tyr385. Residues 414-441 (YRFLRIVVWFVSLLALLGNIFVLLILLT) traverse the membrane as a helical segment. The Cytoplasmic segment spans residues 442–450 (SHYKLTVPR). A helical membrane pass occupies residues 451–473 (FLMCNLAFADFCMGVYLLLIASV). Topologically, residues 474–494 (DLYTHSEYYNHAIDWQTGPGC) are extracellular. Cysteines 494 and 569 form a disulfide. A helical membrane pass occupies residues 495 to 517 (NTAGFFTVFASELSVYTLTVITL). At 518-537 (ERWYAITFAMRLDRKIRLRH) the chain is on the cytoplasmic side. The helical transmembrane segment at 538 to 560 (AYTIMAGGWVSCFLLALLPMVGI) threads the bilayer. Residues 561-580 (SSYAKVSICLPMDTDTPLAL) are Extracellular-facing. A helical transmembrane segment spans residues 581–602 (AYIVLVLLLNVVAFVVVCSCYV). The Cytoplasmic segment spans residues 603–625 (KIYITVRNPQYNPRDKDTKIAKR). Residues 626–649 (MAVLIFTDFMCMAPISFYALSALM) traverse the membrane as a helical segment. At 650 to 660 (NKPLITVTNSK) the chain is on the extracellular side. Residues 661–682 (ILLVLFYPLNSCANPFLYAIFT) traverse the membrane as a helical segment. Topologically, residues 683–764 (KAFQRDVFIL…ISEEYKQTAL (82 aa)) are cytoplasmic. The short motif at 762–764 (TAL) is the PDZ-binding element.

It belongs to the G-protein coupled receptor 1 family. FSH/LSH/TSH subfamily. In terms of assembly, interacts with heterodimer GPHA2:GPHB5; this interaction stimulates cAMP production. Interacts (via the PDZ-binding motif) with SCRIB; regulates TSHR trafficking and function. Post-translationally, glycosylated. Sulfated. Sulfation on Tyr-385 plays a role in thyrotropin receptor binding and activation.

The protein localises to the cell membrane. Its subcellular location is the basolateral cell membrane. In terms of biological role, receptor for the thyroid-stimulating hormone (TSH) or thyrotropin. Also acts as a receptor for the heterodimeric glycoprotein hormone (GPHA2:GPHB5) or thyrostimulin. The activity of this receptor is mediated by G proteins which activate adenylate cyclase. Plays a central role in controlling thyroid cell metabolism. This Mus musculus (Mouse) protein is Thyrotropin receptor (Tshr).